A 743-amino-acid chain; its full sequence is Phosphoribosylformylglycinamidine synthase subunit PurL (743 aa).

Histidine 50 is an active-site residue. Residues tyrosine 53 and lysine 92 each contribute to the ATP site. Residue glutamate 94 coordinates Mg(2+). Substrate is bound by residues 95 to 98 and arginine 117; that span reads SHNH. Histidine 96 serves as the catalytic Proton acceptor. A Mg(2+)-binding site is contributed by aspartate 118. Glutamine 241 serves as a coordination point for substrate. Aspartate 269 lines the Mg(2+) pocket. Position 313 to 315 (313 to 315) interacts with substrate; it reads ESQ. Residues aspartate 494 and glycine 531 each contribute to the ATP site. Asparagine 532 contacts Mg(2+). Serine 534 serves as a coordination point for substrate.

This sequence belongs to the FGAMS family. Monomer. Part of the FGAM synthase complex composed of 1 PurL, 1 PurQ and 2 PurS subunits.

The protein resides in the cytoplasm. The catalysed reaction is N(2)-formyl-N(1)-(5-phospho-beta-D-ribosyl)glycinamide + L-glutamine + ATP + H2O = 2-formamido-N(1)-(5-O-phospho-beta-D-ribosyl)acetamidine + L-glutamate + ADP + phosphate + H(+). Its pathway is purine metabolism; IMP biosynthesis via de novo pathway; 5-amino-1-(5-phospho-D-ribosyl)imidazole from N(2)-formyl-N(1)-(5-phospho-D-ribosyl)glycinamide: step 1/2. Part of the phosphoribosylformylglycinamidine synthase complex involved in the purines biosynthetic pathway. Catalyzes the ATP-dependent conversion of formylglycinamide ribonucleotide (FGAR) and glutamine to yield formylglycinamidine ribonucleotide (FGAM) and glutamate. The FGAM synthase complex is composed of three subunits. PurQ produces an ammonia molecule by converting glutamine to glutamate. PurL transfers the ammonia molecule to FGAR to form FGAM in an ATP-dependent manner. PurS interacts with PurQ and PurL and is thought to assist in the transfer of the ammonia molecule from PurQ to PurL. This Sinorhizobium medicae (strain WSM419) (Ensifer medicae) protein is Phosphoribosylformylglycinamidine synthase subunit PurL.